Here is a 164-residue protein sequence, read N- to C-terminus: C-phycoerythrin class 1 subunit alpha (164 aa).

The (2R,3E)-phycoerythrobilin site is built by cysteine 82 and cysteine 139.

Belongs to the phycobiliprotein family. Heterodimer of an alpha and a beta chain. In terms of processing, contains one covalently linked bilin chromophore.

It localises to the cellular thylakoid membrane. In terms of biological role, light-harvesting photosynthetic bile pigment-protein from the phycobiliprotein complex. This is C-phycoerythrin class 1 subunit alpha (cpeA) from Synechococcus sp. (strain WH7803).